The primary structure comprises 539 residues: O-phosphoserine--tRNA(Cys) ligase (539 aa).

Substrate is bound by residues 188–190, 233–235, 275–276, and Asn-327; these read HMT, SAS, and YY.

This sequence belongs to the class-II aminoacyl-tRNA synthetase family. O-phosphoseryl-tRNA(Cys) synthetase subfamily. Homotetramer. Interacts with SepCysS.

The enzyme catalyses tRNA(Cys) + O-phospho-L-serine + ATP = O-phospho-L-seryl-tRNA(Cys) + AMP + diphosphate. Catalyzes the attachment of O-phosphoserine (Sep) to tRNA(Cys). This chain is O-phosphoserine--tRNA(Cys) ligase, found in Methanosarcina acetivorans (strain ATCC 35395 / DSM 2834 / JCM 12185 / C2A).